A 191-amino-acid polypeptide reads, in one-letter code: A-type ATP synthase subunit E (191 aa).

The protein belongs to the V-ATPase E subunit family. Has multiple subunits with at least A(3), B(3), C, D, E, F, H, I and proteolipid K(x).

Its subcellular location is the cell membrane. Functionally, component of the A-type ATP synthase that produces ATP from ADP in the presence of a proton gradient across the membrane. The protein is A-type ATP synthase subunit E of Methanoregula boonei (strain DSM 21154 / JCM 14090 / 6A8).